Reading from the N-terminus, the 398-residue chain is 2-amino-3-ketobutyrate coenzyme A ligase (398 aa).

Residue 111-112 coordinates pyridoxal 5'-phosphate; the sequence is CF. H136 is a binding site for substrate. Pyridoxal 5'-phosphate contacts are provided by residues S185, 210 to 213, 241 to 244, and 274 to 275; these read DDSH, TLGK, and SN. K244 bears the N6-(pyridoxal phosphate)lysine mark. R368 provides a ligand contact to substrate.

Belongs to the class-II pyridoxal-phosphate-dependent aminotransferase family. Homodimer. Pyridoxal 5'-phosphate serves as cofactor.

It carries out the reaction glycine + acetyl-CoA = (2S)-2-amino-3-oxobutanoate + CoA. The protein operates within amino-acid degradation; L-threonine degradation via oxydo-reductase pathway; glycine from L-threonine: step 2/2. Functionally, catalyzes the cleavage of 2-amino-3-ketobutyrate to glycine and acetyl-CoA. The polypeptide is 2-amino-3-ketobutyrate coenzyme A ligase (Escherichia coli (strain K12)).